Here is a 228-residue protein sequence, read N- to C-terminus: Translin (228 aa).

The interval R86–H90 is DNA/RNA binding. Residues L177–L198 form a leucine-zipper region. K187 carries the post-translational modification N6-acetyllysine. A Phosphoserine modification is found at S190. N6-acetyllysine is present on K199.

This sequence belongs to the translin family. As to quaternary structure, ring-shaped heterooctamer of six TSN and two TSNAX subunits, DNA/RNA binding occurs inside the ring.

The protein localises to the cytoplasm. The protein resides in the nucleus. Functionally, DNA-binding protein that specifically recognizes consensus sequences at the breakpoint junctions in chromosomal translocations, mostly involving immunoglobulin (Ig)/T-cell receptor gene segments. Seems to recognize single-stranded DNA ends generated by staggered breaks occurring at recombination hot spots. Exhibits both single-stranded and double-stranded endoribonuclease activity. May act as an activator of RNA-induced silencing complex (RISC) by facilitating endonucleolytic cleavage of the siRNA passenger strand. In Mus musculus (Mouse), this protein is Translin (Tsn).